A 106-amino-acid chain; its full sequence is Ribonuclease P protein component 4 (106 aa).

Zn(2+)-binding residues include C63, C66, C89, and C92.

It belongs to the eukaryotic/archaeal RNase P protein component 4 family. As to quaternary structure, consists of a catalytic RNA component and at least 4-5 protein subunits. Requires Zn(2+) as cofactor.

It localises to the cytoplasm. It catalyses the reaction Endonucleolytic cleavage of RNA, removing 5'-extranucleotides from tRNA precursor.. Part of ribonuclease P, a protein complex that generates mature tRNA molecules by cleaving their 5'-ends. This is Ribonuclease P protein component 4 from Methanosphaerula palustris (strain ATCC BAA-1556 / DSM 19958 / E1-9c).